A 66-amino-acid chain; its full sequence is FMRFamide-like neuropeptide 21 (66 aa).

The signal sequence occupies residues 1–16; that stretch reads MRLFILLSCLLAWVLA.

The protein belongs to the FARP (FMRFamide related peptide) family. Post-translationally, may be processed by convertase egl-3. As to expression, expressed in the ADL, ASE and ASH sensory neurons, the URA motor neurons and the MC, M2 and M4 pharyngeal neurons.

It localises to the secreted. Functionally, FMRFamide-like neuropeptide. Involved in modulating locomotion quiescence during the sleep-like state called lethargus which occurs during molting between larval and adult stages, acting via the G-protein coupled receptor npr-1. Plays a role in modulating social and feeding behavior. In terms of biological role, ligand to G-protein coupled receptor npr-1. The polypeptide is FMRFamide-like neuropeptide 21 (Caenorhabditis elegans).